Reading from the N-terminus, the 374-residue chain is Queuine tRNA-ribosyltransferase (374 aa).

The active-site Proton acceptor is aspartate 91. Substrate-binding positions include 91 to 95, aspartate 145, glutamine 189, and glycine 216; that span reads DSGGY. Residues 247-253 form an RNA binding region; the sequence is GVGTVPD. The active-site Nucleophile is the aspartate 266. Residues 271-275 form an RNA binding; important for wobble base 34 recognition region; sequence TRNAR. 4 residues coordinate Zn(2+): cysteine 304, cysteine 306, cysteine 309, and histidine 335.

Belongs to the queuine tRNA-ribosyltransferase family. As to quaternary structure, homodimer. Within each dimer, one monomer is responsible for RNA recognition and catalysis, while the other monomer binds to the replacement base PreQ1. It depends on Zn(2+) as a cofactor.

It carries out the reaction 7-aminomethyl-7-carbaguanine + guanosine(34) in tRNA = 7-aminomethyl-7-carbaguanosine(34) in tRNA + guanine. It functions in the pathway tRNA modification; tRNA-queuosine biosynthesis. Functionally, catalyzes the base-exchange of a guanine (G) residue with the queuine precursor 7-aminomethyl-7-deazaguanine (PreQ1) at position 34 (anticodon wobble position) in tRNAs with GU(N) anticodons (tRNA-Asp, -Asn, -His and -Tyr). Catalysis occurs through a double-displacement mechanism. The nucleophile active site attacks the C1' of nucleotide 34 to detach the guanine base from the RNA, forming a covalent enzyme-RNA intermediate. The proton acceptor active site deprotonates the incoming PreQ1, allowing a nucleophilic attack on the C1' of the ribose to form the product. After dissociation, two additional enzymatic reactions on the tRNA convert PreQ1 to queuine (Q), resulting in the hypermodified nucleoside queuosine (7-(((4,5-cis-dihydroxy-2-cyclopenten-1-yl)amino)methyl)-7-deazaguanosine). The chain is Queuine tRNA-ribosyltransferase from Leptospira interrogans serogroup Icterohaemorrhagiae serovar Lai (strain 56601).